The following is a 135-amino-acid chain: Large ribosomal subunit protein uL16c (135 aa).

It belongs to the universal ribosomal protein uL16 family. In terms of assembly, part of the 50S ribosomal subunit.

It localises to the plastid. The protein localises to the chloroplast. This chain is Large ribosomal subunit protein uL16c, found in Lactuca sativa (Garden lettuce).